Here is a 344-residue protein sequence, read N- to C-terminus: Interactor of constitutive active ROPs 1 (344 aa).

Disordered stretches follow at residues 1 to 74, 92 to 139, 186 to 218, and 307 to 344; these read MPRP…ESQL, EAVK…KETD, HESL…DEMV, and FMDP…KGQK. The segment covering 19-29 has biased composition (low complexity); that stretch reads SSSSTSDSNHS. Residues 60-108 are a coiled coil; it reads QKKLGGRISDLESQLGQAQEELRLLKEQLANAEAVKKQAQDELHKKSKK. Composition is skewed to basic and acidic residues over residues 93–103, 114–139, and 186–195; these read AVKKQAQDELH, RVEE…KETD, and HESLGKENES. Residues 145 to 273 adopt a coiled-coil conformation; that stretch reads VEKIAVEEEE…EQWRKAADAA (129 aa). The segment covering 196 to 211 has biased composition (polar residues); that stretch reads LKNQLSDSASEISNVK.

Belongs to the ICR family. As to quaternary structure, homooligomer. Interacts with ARAC3, ARAC4, ARAC8, ARAC11 and SEC3A, but not with ICR2 or EXO70A1. In terms of tissue distribution, expressed in mature and germinating pollen. Expressed throughout the embryo but not in the hypophysis and quiescent center (QC). In roots, absent from the QC and the stem cells.

Its subcellular location is the cell membrane. The protein resides in the nucleus. Acts as a scaffold, mediating interaction of ROPs with different proteins. Required for primary and adventitious root maintenance, but not for their formation. Promotes the stabilization of ARAC11 on the plasma membrane of the pollen tube initiation site but not the activation of ARAC11. Regulates directionality of polar auxin transport, and is required for the formation of a stable auxin maximum and tip localized auxin gradient during embryogenesis, organogenesis, and meristem activity. Involved in exocytosis and in the recycling of PIN proteins back to the plasma membrane. This chain is Interactor of constitutive active ROPs 1 (ICR1), found in Arabidopsis thaliana (Mouse-ear cress).